We begin with the raw amino-acid sequence, 892 residues long: Translation initiation factor IF-2 (892 aa).

A disordered region spans residues 65–296 (KTRSTLNIPS…KGKRKPSTLQ (232 aa)). Positions 68 to 82 (STLNIPSTGGKSKSV) are enriched in polar residues. Residues 99–217 (EQAKAEEQAQ…KMAAENEGKW (119 aa)) are compositionally biased toward basic and acidic residues. A compositionally biased stretch (polar residues) spans 224-237 (QTESADYHVTTSQH). Basic and acidic residues predominate over residues 239–254 (RAAEDENDAKVEGDRR). Basic residues predominate over residues 255-269 (SRTRGGKATKQKKGN). Positions 270–283 (KLSESKADREEARA) are enriched in basic and acidic residues. A tr-type G domain is found at 391 to 560 (HRAPVVTIMG…LLQAEVLELK (170 aa)). Residues 400 to 407 (GHVDHGKT) are G1. GTP is bound at residue 400 to 407 (GHVDHGKT). The G2 stretch occupies residues 425 to 429 (GITQH). The interval 446–449 (DTPG) is G3. Residues 446–450 (DTPGH) and 500–503 (NKID) contribute to the GTP site. Positions 500 to 503 (NKID) are G4. The tract at residues 536 to 538 (SAK) is G5.

Belongs to the TRAFAC class translation factor GTPase superfamily. Classic translation factor GTPase family. IF-2 subfamily.

The protein localises to the cytoplasm. One of the essential components for the initiation of protein synthesis. Protects formylmethionyl-tRNA from spontaneous hydrolysis and promotes its binding to the 30S ribosomal subunits. Also involved in the hydrolysis of GTP during the formation of the 70S ribosomal complex. The polypeptide is Translation initiation factor IF-2 (Yersinia pseudotuberculosis serotype O:1b (strain IP 31758)).